The following is a 346-amino-acid chain: Phosphoribosylformylglycinamidine cyclo-ligase (346 aa).

The protein belongs to the AIR synthase family.

The protein localises to the cytoplasm. It catalyses the reaction 2-formamido-N(1)-(5-O-phospho-beta-D-ribosyl)acetamidine + ATP = 5-amino-1-(5-phospho-beta-D-ribosyl)imidazole + ADP + phosphate + H(+). It participates in purine metabolism; IMP biosynthesis via de novo pathway; 5-amino-1-(5-phospho-D-ribosyl)imidazole from N(2)-formyl-N(1)-(5-phospho-D-ribosyl)glycinamide: step 2/2. The sequence is that of Phosphoribosylformylglycinamidine cyclo-ligase from Brevibacillus brevis (strain 47 / JCM 6285 / NBRC 100599).